We begin with the raw amino-acid sequence, 557 residues long: Formate--tetrahydrofolate ligase (557 aa).

An ATP-binding site is contributed by 66–73 (TPAGEGKS).

The protein belongs to the formate--tetrahydrofolate ligase family.

The catalysed reaction is (6S)-5,6,7,8-tetrahydrofolate + formate + ATP = (6R)-10-formyltetrahydrofolate + ADP + phosphate. The protein operates within one-carbon metabolism; tetrahydrofolate interconversion. In Clostridium botulinum (strain Loch Maree / Type A3), this protein is Formate--tetrahydrofolate ligase.